We begin with the raw amino-acid sequence, 491 residues long: Cobyric acid synthase (491 aa).

One can recognise a GATase cobBQ-type domain in the interval 250-437 (RLRVVVPVLP…LHGIFDHPAA (188 aa)). Cys331 acts as the Nucleophile in catalysis. The active site involves His429.

Belongs to the CobB/CobQ family. CobQ subfamily.

It functions in the pathway cofactor biosynthesis; adenosylcobalamin biosynthesis. Catalyzes amidations at positions B, D, E, and G on adenosylcobyrinic A,C-diamide. NH(2) groups are provided by glutamine, and one molecule of ATP is hydrogenolyzed for each amidation. This is Cobyric acid synthase from Xanthomonas campestris pv. campestris (strain B100).